Consider the following 313-residue polypeptide: WD repeat-containing protein 82-B (313 aa).

6 WD repeats span residues 19–58 (ENSD…PKRT), 105–144 (GHSK…CQGL), 146–184 (HLQG…KGPF), 192–231 (DRTC…VMHT), 236–276 (NNSK…KVAV), and 280–313 (KHTG…TIDD).

The protein belongs to the WD repeat SWD2 family. As to quaternary structure, component of the SET1/COMPASS complex. Component of the PNUTS-PP1 phosphatase complex.

The protein localises to the nucleus. Its subcellular location is the chromosome. It localises to the cytoplasm. Its function is as follows. Regulatory component of the SET1/COMPASS complex implicated in the tethering of this complex to transcriptional start sites of active genes. Facilitates histone H3 'Lys-4' methylation (H3K4me) via recruitment of the SETD1A or SETD1B to the 'Ser-5' phosphorylated C-terminal domain (CTD) of RNA polymerase II large subunit (POLR2A). Component of the PNUTS-PP1 protein phosphatase complex, a protein phosphatase 1 (PP1) complex that promotes RNA polymerase II transcription pause-release, allowing transcription elongation. This chain is WD repeat-containing protein 82-B (wdr82-b), found in Xenopus laevis (African clawed frog).